A 225-amino-acid polypeptide reads, in one-letter code: NAD(P)H-quinone oxidoreductase subunit K, chloroplastic (225 aa).

The [4Fe-4S] cluster site is built by cysteine 43, cysteine 44, cysteine 108, and cysteine 139.

The protein belongs to the complex I 20 kDa subunit family. NDH is composed of at least 16 different subunits, 5 of which are encoded in the nucleus. [4Fe-4S] cluster is required as a cofactor.

It localises to the plastid. The protein localises to the chloroplast thylakoid membrane. The catalysed reaction is a plastoquinone + NADH + (n+1) H(+)(in) = a plastoquinol + NAD(+) + n H(+)(out). It carries out the reaction a plastoquinone + NADPH + (n+1) H(+)(in) = a plastoquinol + NADP(+) + n H(+)(out). Its function is as follows. NDH shuttles electrons from NAD(P)H:plastoquinone, via FMN and iron-sulfur (Fe-S) centers, to quinones in the photosynthetic chain and possibly in a chloroplast respiratory chain. The immediate electron acceptor for the enzyme in this species is believed to be plastoquinone. Couples the redox reaction to proton translocation, and thus conserves the redox energy in a proton gradient. This Lepidium virginicum (Virginia pepperweed) protein is NAD(P)H-quinone oxidoreductase subunit K, chloroplastic.